The chain runs to 125 residues: Large ribosomal subunit protein bL21 (125 aa).

The protein belongs to the bacterial ribosomal protein bL21 family. In terms of assembly, part of the 50S ribosomal subunit. Contacts protein L20.

Its function is as follows. This protein binds to 23S rRNA in the presence of protein L20. The sequence is that of Large ribosomal subunit protein bL21 from Synechococcus sp. (strain CC9902).